The sequence spans 139 residues: General odorant-binding protein 56a (139 aa).

The N-terminal stretch at 1–19 (MNSYFVIALSALFVTLAVG) is a signal peptide. N-linked (GlcNAc...) asparagine glycosylation occurs at N23. Intrachain disulfides connect C39–C71, C67–C118, and C109–C127.

It belongs to the PBP/GOBP family. As to expression, expressed in ventral pits of larvae. In adults, it is not specifically expressed in chemosensory organs. Also expressed in stalk cells at the proximal tip of the wing disk.

Its subcellular location is the secreted. Its function is as follows. Present in the aqueous fluid surrounding olfactory sensory dendrites and are thought to aid in the capture and transport of hydrophobic odorants into and through this fluid. The chain is General odorant-binding protein 56a (Obp56a) from Drosophila melanogaster (Fruit fly).